We begin with the raw amino-acid sequence, 319 residues long: Type II methyltransferase M.RsrI (319 aa).

The span at 1-10 (MANRSHHNAG) shows a compositional bias: basic residues. Residues 1-32 (MANRSHHNAGHRAMNALRKSGQKHSSESQLGS) form a disordered region.

The protein belongs to the N(4)/N(6)-methyltransferase family.

It carries out the reaction a 2'-deoxyadenosine in DNA + S-adenosyl-L-methionine = an N(6)-methyl-2'-deoxyadenosine in DNA + S-adenosyl-L-homocysteine + H(+). Strongly inhibited by N-ethylmaleimide, inactivated by MgCl(2) or MgSO(4). Functionally, a beta subtype methylase, recognizes the double-stranded sequence 5'-GAATTC-3', methylates A-3 on both strands, and protects the DNA from cleavage by the RsrI endonuclease. The chain is Type II methyltransferase M.RsrI from Cereibacter sphaeroides (Rhodobacter sphaeroides).